A 799-amino-acid chain; its full sequence is 1-phosphatidylinositol 4,5-bisphosphate phosphodiesterase delta-4 (799 aa).

Residues 16–124 (LLMQEGMPMR…WMRGLHLLVD (109 aa)) enclose the PH domain. A substrate binding region spans residues 26–53 (KVRSKSWKKLRYFRLQNDGMTVWHARQA). 3 EF-hand domains span residues 134 to 169 (RLDQ…MNVE), 170 to 205 (MDQE…LTKR), and 206 to 237 (AEVQ…EQKE). Residues aspartate 147, asparagine 149, aspartate 151, lysine 153, glutamate 158, aspartate 183, serine 185, serine 187, threonine 189, and glutamate 194 each contribute to the Ca(2+) site. The GBA signature appears at 213–243 (ESFSADGQKLTLLEFSDFLREEQKERDCTSE). The PI-PLC X-box domain maps to 290–435 (QDMTQPLNHY…LRRKILVKGK (146 aa)). Histidine 305 is a catalytic residue. Ca(2+) is bound by residues asparagine 306, glutamate 335, and aspartate 337. The active site involves histidine 350. Glutamate 384 is a binding site for Ca(2+). Substrate contacts are provided by lysine 433 and lysine 435. Serine 460 is subject to Phosphoserine. A PI-PLC Y-box domain is found at 530-646 (LSSLVIYLKS…GYVLKPDFLR (117 aa)). Substrate is bound by residues serine 559 and arginine 586. Residues 646-773 (RDNQSSFHPE…QGYRHIHLLS (128 aa)) enclose the C2 domain. The Ca(2+) site is built by isoleucine 687, aspartate 689, asparagine 713, aspartate 742, tyrosine 743, and aspartate 744. The PDZ-binding signature appears at 768-771 (HIHL).

As to quaternary structure, interacts with GRIP1. Interacts (via GBA motif) with guanine nucleotide-binding protein G(i) alpha subunit GNAI3 (inactive GDP-bound form); low-affinity interaction. It depends on Ca(2+) as a cofactor.

The protein resides in the membrane. It localises to the nucleus. Its subcellular location is the cytoplasm. It is found in the endoplasmic reticulum. The catalysed reaction is a 1,2-diacyl-sn-glycero-3-phospho-(1D-myo-inositol-4,5-bisphosphate) + H2O = 1D-myo-inositol 1,4,5-trisphosphate + a 1,2-diacyl-sn-glycerol + H(+). It carries out the reaction a 1,2-diacyl-sn-glycero-3-phospho-(1D-myo-inositol) + H2O = 1D-myo-inositol 1-phosphate + a 1,2-diacyl-sn-glycerol + H(+). In terms of biological role, hydrolyzes the phosphatidylinositol 4,5-bisphosphate (PIP2) to generate 2 second messenger molecules diacylglycerol (DAG) and inositol 1,4,5-trisphosphate (IP3). DAG mediates the activation of protein kinase C (PKC), while IP3 releases Ca(2+) from intracellular stores. Required for acrosome reaction in sperm during fertilization, probably by acting as an important enzyme for intracellular Ca(2+) mobilization in the zona pellucida-induced acrosome reaction. May play a role in cell growth. Modulates the liver regeneration in cooperation with nuclear PKC. Overexpression up-regulates the Erk signaling pathway and proliferation. The sequence is that of 1-phosphatidylinositol 4,5-bisphosphate phosphodiesterase delta-4 (PLCD4) from Macaca fascicularis (Crab-eating macaque).